Here is a 101-residue protein sequence, read N- to C-terminus: Small ribosomal subunit protein bS18c (101 aa).

Basic residues predominate over residues 1–19 (MDKSKQPFHKTKRSFRRRL). The tract at residues 1–23 (MDKSKQPFHKTKRSFRRRLPPIG) is disordered.

It belongs to the bacterial ribosomal protein bS18 family. Part of the 30S ribosomal subunit.

It localises to the plastid. Its subcellular location is the chloroplast. This Lemna minor (Common duckweed) protein is Small ribosomal subunit protein bS18c.